The sequence spans 89 residues: Small ribosomal subunit protein uS15 (89 aa).

The protein belongs to the universal ribosomal protein uS15 family. Part of the 30S ribosomal subunit. Forms a bridge to the 50S subunit in the 70S ribosome, contacting the 23S rRNA.

Functionally, one of the primary rRNA binding proteins, it binds directly to 16S rRNA where it helps nucleate assembly of the platform of the 30S subunit by binding and bridging several RNA helices of the 16S rRNA. In terms of biological role, forms an intersubunit bridge (bridge B4) with the 23S rRNA of the 50S subunit in the ribosome. The protein is Small ribosomal subunit protein uS15 of Streptococcus suis (strain 98HAH33).